Consider the following 235-residue polypeptide: Cytidylate kinase (235 aa).

An ATP-binding site is contributed by 16-24; it reads GPAASGKST.

The protein belongs to the cytidylate kinase family. Type 1 subfamily.

The protein localises to the cytoplasm. The catalysed reaction is CMP + ATP = CDP + ADP. It catalyses the reaction dCMP + ATP = dCDP + ADP. The chain is Cytidylate kinase from Chloroherpeton thalassium (strain ATCC 35110 / GB-78).